Consider the following 678-residue polypeptide: Nucleolar protein 9 (678 aa).

A compositionally biased stretch (basic residues) spans 1–15 (MPRDKQKRGRRAEAK). Residues 1-24 (MPRDKQKRGRRAEAKRKRDDVITD) are disordered. 3 Pumilio repeats span residues 108 to 143 (EANGKELKIACSQSCSRLMEKLISASTVSQIKRLFS), 291 to 334 (GLDN…SLLR), and 382 to 419 (KILVRERIGSFSRNEIAGHVVVRILERLSKDDLKSAMD). The tract at residues 477-496 (QRSNQESDGTTSSSNTSSPE) is disordered. Pumilio repeat units lie at residues 524–562 (AVTTETLISIAQDPVVSHVLQDALTLPTSTPQFRRQITS) and 563–600 (RFSGKIAELALHSSGSHVVDALWPATKDLLFVKQRFAE).

The protein resides in the nucleus. It is found in the nucleolus. RNA-binding nucleolar protein required for pre-rRNA processing. Involved in production of 18S rRNA and assembly of small ribosomal subunit. The polypeptide is Nucleolar protein 9 (NOP9) (Paracoccidioides brasiliensis (strain Pb18)).